Here is a 647-residue protein sequence, read N- to C-terminus: Carboxypeptidase Z (647 aa).

The N-terminal stretch at 1 to 18 (MVPSLLLLLTGLFRATEP) is a signal peptide. In terms of domain architecture, FZ spans 35–157 (AQKAKCVDIS…AGEEEGCFDP (123 aa)). 5 cysteine pairs are disulfide-bonded: cysteine 40-cysteine 106, cysteine 48-cysteine 99, cysteine 90-cysteine 126, cysteine 115-cysteine 154, and cysteine 119-cysteine 143. Residues 183–499 (KHHSYSQMVS…DALLNYMEMV (317 aa)) form the Peptidase M14 domain. The Zn(2+) site is built by histidine 245 and glutamate 248. The N-linked (GlcNAc...) asparagine glycan is linked to asparagine 278. Histidine 377 is a Zn(2+) binding site. Catalysis depends on glutamate 469, which acts as the Proton donor/acceptor.

The protein belongs to the peptidase M14 family. Interacts with WNT4 vie its FZ domain. It depends on Zn(2+) as a cofactor. As to expression, in the early embryo it is initially expressed throughout the somites and subsequently becomes restricted to the sclerotome. Expressed in somites, paraxial head mesoderm and apical ectodermal ridge.

It localises to the secreted. It is found in the extracellular space. The protein resides in the extracellular matrix. Its activity is regulated as follows. Inhibited by 2-mercaptomethyl-3-guanidinoethylthiopropanoic acid (MGTA) and guanidinoethylmercaptosuccinic acid (GEMSA). Inhibited by chelating agents such as EDTA and EGTA. Functionally, cleaves substrates with C-terminal arginine residues. Modulates the Wnt signaling pathway, probably by cleaving some undefined protein. Regulates the development of skeletal elements during development, probably by activating WNT4. The chain is Carboxypeptidase Z (CPZ) from Gallus gallus (Chicken).